We begin with the raw amino-acid sequence, 719 residues long: Glutathionylspermidine synthase (719 aa).

In terms of domain architecture, Peptidase C51 spans 54-200; the sequence is CLPLSSFERK…TESGEVELLD (147 aa). Glutathione is bound at residue R350. 350-352 provides a ligand contact to ATP; that stretch reads RFD. Residues D352, E364, and N366 each coordinate Mg(2+). S369 provides a ligand contact to glutathione. Position 432 (E432) interacts with spermidine. Glutathione-binding residues include E433 and T501. ATP contacts are provided by residues K544, K579, G586, Q653, and 689-691; that span reads KIT.

This sequence in the C-terminal section; belongs to the glutathionylspermidine synthase preATP-grasp family. It depends on Mg(2+) as a cofactor. In terms of processing, the N-terminus is blocked.

It carries out the reaction spermidine + glutathione + ATP = glutathionylspermidine + ADP + phosphate + H(+). Conjugates glutathione (gamma-Glu-Cys-Gly) and spermidine to form glutathionylspermidine in the biosynthesis trypanothione (N(1),N(8)-bis(glutathionyl)spermidine), which is involved in maintaining intracellular thiol redox and in defense against oxidants. The protein is Glutathionylspermidine synthase (GSP) of Crithidia fasciculata.